Here is a 586-residue protein sequence, read N- to C-terminus: Homothallic switching endonuclease (586 aa).

One can recognise a DOD-type homing endonuclease domain in the interval 215–370 (MLGLWLGDST…IVHISRSLGM (156 aa)).

Post-translationally, rapidly degraded via the ubiquitin-26S proteasome system through two ubiquitin-conjugating enzymes UBC2/RAD6 and UBC3/CDC34.

The protein localises to the nucleus. Initiation of mating type interconversion. This protein is a site-specific endonuclease that cleaves a site in the mat locus on chromosome III. The double-strand break is followed by a unidirectional gene conversion event that replaces the information at the mat locus by information copied from either of the two homologous loci (HMR and HML) that reside at the extremity of the chromosome III. Endonuclease expression takes place in late G1 just before cells enter S phase. The sequence is that of Homothallic switching endonuclease (HO) from Saccharomyces cerevisiae (strain ATCC 204508 / S288c) (Baker's yeast).